The chain runs to 251 residues: Azurocidin (251 aa).

Positions 1 to 19 (MTRLTVLALLAGLLASSRA) are cleaved as a signal peptide. A propeptide spans 20–26 (GSSPLLD) (removed in mature form). Residues 25–26 (LD) constitute a propeptide, dipeptide found in non-mature form. The region spanning 27 to 244 (IVGGRKARPR…FRDWIDGVLN (218 aa)) is the Peptidase S1 domain. Residues 46–70 (NQGRHFCGGALIHARFVMTAASCFQ) form a possesses antibiotic activity region. An intrachain disulfide couples cysteine 52 to cysteine 68. The N-linked (GlcNAc...) asparagine; partial glycan is linked to asparagine 126. Asparagine 140 is a glycosylation site (N-linked (GlcNAc...) asparagine). 3 disulfides stabilise this stretch: cysteine 149/cysteine 207, cysteine 180/cysteine 186, and cysteine 197/cysteine 222. A glycan (N-linked (GlcNAc...) asparagine; partial) is linked at asparagine 171. Residues 249-251 (GPA) constitute a propeptide, removed in mature form.

Belongs to the peptidase S1 family. Elastase subfamily. In terms of processing, cleavage of the N-terminal propeptide which is composed of 7 amino acids occurs in two steps. The initial cleavage of 5 amino acids is followed by the cleavage of a dipeptide to produce the mature form.

It localises to the cytoplasmic granule membrane. In terms of biological role, this is a neutrophil granule-derived antibacterial and monocyte- and fibroblast-specific chemotactic glycoprotein. Binds heparin. The cytotoxic action is limited to many species of Gram-negative bacteria; this specificity may be explained by a strong affinity of the very basic N-terminal half for the negatively charged lipopolysaccharides that are unique to the Gram-negative bacterial outer envelope. It may play a role in mediating recruitment of monocytes in the second wave of inflammation. Has antibacterial activity against the Gram-negative bacterium P.aeruginosa, this activity is inhibited by LPS from P.aeruginosa. Acting alone, it does not have antimicrobial activity against the Gram-negative bacteria A.actinomycetemcomitans ATCC 29532, A.actinomycetemcomitans NCTC 9709, A.actinomycetemcomitans FDC-Y4, H.aphrophilus ATCC 13252, E.corrodens ATCC 23834, C.sputigena ATCC 33123, Capnocytophaga sp ATCC 33124, Capnocytophaga sp ATCC 27872 or E.coli ML-35. Has antibacterial activity against C.sputigena ATCC 33123 when acting synergistically with either elastase or cathepsin G. This is Azurocidin from Homo sapiens (Human).